The sequence spans 1075 residues: DNA-directed RNA polymerase subunit beta (1075 aa).

This sequence belongs to the RNA polymerase beta chain family. In plastids the minimal PEP RNA polymerase catalytic core is composed of four subunits: alpha, beta, beta', and beta''. When a (nuclear-encoded) sigma factor is associated with the core the holoenzyme is formed, which can initiate transcription.

Its subcellular location is the plastid. The protein localises to the chloroplast. The catalysed reaction is RNA(n) + a ribonucleoside 5'-triphosphate = RNA(n+1) + diphosphate. Its function is as follows. DNA-dependent RNA polymerase catalyzes the transcription of DNA into RNA using the four ribonucleoside triphosphates as substrates. The protein is DNA-directed RNA polymerase subunit beta of Sorghum bicolor (Sorghum).